The chain runs to 276 residues: Large ribosomal subunit protein uL2 (276 aa).

The interval 221-276 is disordered; the sequence is RGSAMNPNDHPHGGGEGRAPIGRKSPMTPWGKKARGVKTRDRKKASNALIIRRRTK. The segment covering 252–276 has biased composition (basic residues); the sequence is KKARGVKTRDRKKASNALIIRRRTK.

The protein belongs to the universal ribosomal protein uL2 family. In terms of assembly, part of the 50S ribosomal subunit. Forms a bridge to the 30S subunit in the 70S ribosome.

Its function is as follows. One of the primary rRNA binding proteins. Required for association of the 30S and 50S subunits to form the 70S ribosome, for tRNA binding and peptide bond formation. It has been suggested to have peptidyltransferase activity; this is somewhat controversial. Makes several contacts with the 16S rRNA in the 70S ribosome. In Aster yellows phytoplasma, this protein is Large ribosomal subunit protein uL2.